The sequence spans 139 residues: Gastrula zinc finger protein XlCGF67.1 (139 aa).

C2H2-type zinc fingers lie at residues 6–28 (VSCP…KKVH), 33–55 (YSCS…LRTH), 61–83 (YSCS…KRIH), 89–111 (FSCQ…QKIH), and 117–139 (FSCS…SRIH).

Belongs to the krueppel C2H2-type zinc-finger protein family.

It localises to the nucleus. Its function is as follows. May be involved in transcriptional regulation. The chain is Gastrula zinc finger protein XlCGF67.1 from Xenopus laevis (African clawed frog).